The following is a 188-amino-acid chain: Elongation factor P (188 aa).

The protein belongs to the elongation factor P family.

Its subcellular location is the cytoplasm. Its pathway is protein biosynthesis; polypeptide chain elongation. Functionally, involved in peptide bond synthesis. Stimulates efficient translation and peptide-bond synthesis on native or reconstituted 70S ribosomes in vitro. Probably functions indirectly by altering the affinity of the ribosome for aminoacyl-tRNA, thus increasing their reactivity as acceptors for peptidyl transferase. The protein is Elongation factor P of Phytoplasma mali (strain AT).